Reading from the N-terminus, the 853-residue chain is Envelope glycoprotein gp160 (853 aa).

The first 31 residues, 1–31 (MRVKEIRKNWQHLRGGILLLGMLMICSAAKE), serve as a signal peptide directing secretion. Residues 32 to 681 (KTWVTIYYGV…ITNWLWYIRL (650 aa)) are Extracellular-facing. Cys-53 and Cys-73 are oxidised to a cystine. N-linked (GlcNAc...) asparagine; by host glycans are attached at residues Asn-87, Asn-129, Asn-134, Asn-138, Asn-157, Asn-189, Asn-199, Asn-232, Asn-236, Asn-243, Asn-264, Asn-278, Asn-291, Asn-297, Asn-303, Asn-333, Asn-340, Asn-356, and Asn-362. 5 disulfide bridges follow: Cys-118–Cys-207, Cys-125–Cys-198, Cys-130–Cys-158, Cys-220–Cys-249, and Cys-230–Cys-241. The segment at 130-157 (CTNLNITKNTTNPTSSSWGMMEKGEIKN) is V1. The V2 stretch occupies residues 158 to 198 (CSFYITTSIRNKVKKEYALFNRLDVVPIENTNNTKYRLISC). Residues 298–331 (CTRPNNNTRRRLSIGPGRAFYARRNIIGDIRQAH) are V3. A disulfide bond links Cys-298 and Cys-332. Residues 364–374 (SSGGDPEIVMH) form a CD4-binding loop region. 2 disulfide bridges follow: Cys-378/Cys-441 and Cys-385/Cys-414. Residues 385-414 (CNTAQLFNSTWNVTGGTNGTEGNDIITLQC) are V4. 5 N-linked (GlcNAc...) asparagine; by host glycosylation sites follow: Asn-392, Asn-396, Asn-402, Asn-444, and Asn-456. The segment at 459 to 468 (ETETEIFRPG) is V5. The interval 509–529 (AVGIGAVFLGFLGAAGSTMGA) is fusion peptide. The interval 571–589 (KQLQARVLALERYLRDQQL) is immunosuppression. Cys-595 and Cys-601 are disulfide-bonded. N-linked (GlcNAc...) asparagine; by host glycans are attached at residues Asn-608, Asn-613, Asn-622, and Asn-634. Positions 630–664 (REIDNYTDYIYDLLEKSQTQQEKNEKELLELDKWA) form a coiled coil. Positions 659–680 (ELDKWASLWNWFDITNWLWYIR) are MPER; binding to GalCer. The chain crosses the membrane as a helical span at residues 682–702 (FIMIVGGLIGLRIVFAVLSIV). The Cytoplasmic portion of the chain corresponds to 703–853 (NRVRQGYSPL…IRQGLERALL (151 aa)). Positions 709-712 (YSPL) match the YXXL motif; contains endocytosis signal motif. The interval 718–740 (LPASRGPDRPEGTEEEGGERDRD) is disordered. Residues Cys-761 and Cys-834 are each lipidated (S-palmitoyl cysteine; by host). A Di-leucine internalization motif motif is present at residues 852–853 (LL).

This sequence belongs to the HIV-1 env protein family. In terms of assembly, the mature envelope protein (Env) consists of a homotrimer of non-covalently associated gp120-gp41 heterodimers. The resulting complex protrudes from the virus surface as a spike. There seems to be as few as 10 spikes on the average virion. Interacts with host CD4, CCR5 and CXCR4. Gp120 also interacts with the C-type lectins CD209/DC-SIGN and CLEC4M/DC-SIGNR (collectively referred to as DC-SIGN(R)). Gp120 and gp41 interact with GalCer. Gp120 interacts with host ITGA4/ITGB7 complex; on CD4+ T-cells, this interaction results in rapid activation of integrin ITGAL/LFA-1, which facilitates efficient cell-to-cell spreading of HIV-1. Gp120 interacts with cell-associated heparan sulfate; this interaction increases virus infectivity on permissive cells and may be involved in infection of CD4- cells. The mature envelope protein (Env) consists of a homotrimer of non-covalently associated gp120-gp41 heterodimers. The resulting complex protrudes from the virus surface as a spike. There seems to be as few as 10 spikes on the average virion. Highly glycosylated by host. The high number of glycan on the protein is reffered to as 'glycan shield' because it contributes to hide protein sequence from adaptive immune system. Post-translationally, palmitoylation of the transmembrane protein and of Env polyprotein (prior to its proteolytic cleavage) is essential for their association with host cell membrane lipid rafts. Palmitoylation is therefore required for envelope trafficking to classical lipid rafts, but not for viral replication. In terms of processing, specific enzymatic cleavages in vivo yield mature proteins. Envelope glycoproteins are synthesized as an inactive precursor that is heavily N-glycosylated and processed likely by host cell furin in the Golgi to yield the mature SU and TM proteins. The cleavage site between SU and TM requires the minimal sequence [KR]-X-[KR]-R. About 2 of the 9 disulfide bonds of gp41 are reduced by P4HB/PDI, following binding to CD4 receptor.

It is found in the virion membrane. It localises to the host cell membrane. The protein resides in the host endosome membrane. Functionally, oligomerizes in the host endoplasmic reticulum into predominantly trimers. In a second time, gp160 transits in the host Golgi, where glycosylation is completed. The precursor is then proteolytically cleaved in the trans-Golgi and thereby activated by cellular furin or furin-like proteases to produce gp120 and gp41. Attaches the virus to the host lymphoid cell by binding to the primary receptor CD4. This interaction induces a structural rearrangement creating a high affinity binding site for a chemokine coreceptor like CXCR4 and/or CCR5. Acts as a ligand for CD209/DC-SIGN and CLEC4M/DC-SIGNR, which are respectively found on dendritic cells (DCs), and on endothelial cells of liver sinusoids and lymph node sinuses. These interactions allow capture of viral particles at mucosal surfaces by these cells and subsequent transmission to permissive cells. HIV subverts the migration properties of dendritic cells to gain access to CD4+ T-cells in lymph nodes. Virus transmission to permissive T-cells occurs either in trans (without DCs infection, through viral capture and transmission), or in cis (following DCs productive infection, through the usual CD4-gp120 interaction), thereby inducing a robust infection. In trans infection, bound virions remain infectious over days and it is proposed that they are not degraded, but protected in non-lysosomal acidic organelles within the DCs close to the cell membrane thus contributing to the viral infectious potential during DCs' migration from the periphery to the lymphoid tissues. On arrival at lymphoid tissues, intact virions recycle back to DCs' cell surface allowing virus transmission to CD4+ T-cells. In terms of biological role, acts as a class I viral fusion protein. Under the current model, the protein has at least 3 conformational states: pre-fusion native state, pre-hairpin intermediate state, and post-fusion hairpin state. During fusion of viral and target intracellular membranes, the coiled coil regions (heptad repeats) assume a trimer-of-hairpins structure, positioning the fusion peptide in close proximity to the C-terminal region of the ectodomain. The formation of this structure appears to drive apposition and subsequent fusion of viral and target cell membranes. Complete fusion occurs in host cell endosomes and is dynamin-dependent, however some lipid transfer might occur at the plasma membrane. The virus undergoes clathrin-dependent internalization long before endosomal fusion, thus minimizing the surface exposure of conserved viral epitopes during fusion and reducing the efficacy of inhibitors targeting these epitopes. Membranes fusion leads to delivery of the nucleocapsid into the cytoplasm. This is Envelope glycoprotein gp160 from Human immunodeficiency virus type 1 group M subtype B (strain 89.6) (HIV-1).